Reading from the N-terminus, the 457-residue chain is Ig mu chain C region (457 aa).

Residues 1 to 105 are CH1; the sequence is SSSAPLLFPL…GEKEKKVELQ (105 aa). Cysteine 27 and cysteine 89 are joined by a disulfide. N-linked (GlcNAc...) asparagine glycans are attached at residues asparagine 45 and asparagine 113. The segment at 106–220 is CH2; the sequence is VTPELPPNVS…KNVSSVCMGD (115 aa). Cysteine 136 and cysteine 200 are oxidised to a cystine. 3 N-linked (GlcNAc...) asparagine glycosylation sites follow: asparagine 212, asparagine 276, and asparagine 283. The tract at residues 221-326 is CH3; it reads DTSTGISVFL…PLKQSLSRPK (106 aa). Cystine bridges form between cysteine 248-cysteine 307 and cysteine 355-cysteine 417. Positions 327 to 457 are CH4; it reads DVANDPPSVF…VLSDTASTCY (131 aa). Asparagine 444 carries an N-linked (GlcNAc...) asparagine glycan.

The polypeptide is Ig mu chain C region (Suncus murinus (Asian house shrew)).